The primary structure comprises 761 residues: MSAHPVDTVTAATATPDVAQPFKELGLKDDEYARIKEILGRRPTEAELAMYSVMWSEHCSYKSSKVHLRYFGETTTDEMRSSMLAGIGENAGVVDIGDGWAVTFKVESHNHPSYVEPYQGAATGVGGIVRDIMAMGARPIAVMDQLRFGAADAPDTRRVVDGVVRGVGGYGNSLGLPNIGGETVFDESYAGNPLVNALCAGTMRVEDLHLAFASGAGNKIILFGARTGLDGIGGVSVLASETFDGDESGTGRKKLPAVQVGDPFTEKVLIECCLELYAAKLVVGIQDLGGAGLSCATSELAAAGDGGMHINLEQVPMRATGMTAAEVLSSESQERMCAVVTPENVDAFMAVCKKWDVLATDIGEVTDGDRLTISWHGETVVDVPPRTVAHEGPVYERPVQRPASQDALVANTTAGLKRPESADELKATLLKMIASPALCSRKWITEQYDRYVRGNTVLAENADSGVIRVDEKTGRGIALATDASGRYTALDPYAGAQLALAEAFRNVAVTGATPKAVSNCLNFGSPEDPGVMWQFQQAVRGLADGCATLGIPVTGGNVSFYNQTGSTAILPTPVVAVLGVIDDVHRRIPTGLGLEPGETLILLGDTNDEFDGSIWSQVEHGHLGGVPPKVDLEREQLLADILLAASRDGLVSAAHDLSEGGLAQAVVEAALAGETGCRILLPDDADPFVTLFSESSGRVLVAVPRTEETRFTGMCTARNLPWVRIGVVDEGSDSVEVQGQFSVSLAELRTTFEGTLPALFG.

The active site involves His-58. Tyr-61 and Lys-105 together coordinate ATP. Residue Glu-107 participates in Mg(2+) binding. Substrate-binding positions include 108–111 (SHNH) and Arg-130. The Proton acceptor role is filled by His-109. Asp-131 contacts Mg(2+). Gln-259 provides a ligand contact to substrate. Asp-287 contributes to the Mg(2+) binding site. 331–333 (ESQ) is a substrate binding site. Positions 519 and 556 each coordinate ATP. Residue Asn-557 coordinates Mg(2+). Ser-559 lines the substrate pocket.

It belongs to the FGAMS family. Monomer. Part of the FGAM synthase complex composed of 1 PurL, 1 PurQ and 2 PurS subunits.

The protein localises to the cytoplasm. The catalysed reaction is N(2)-formyl-N(1)-(5-phospho-beta-D-ribosyl)glycinamide + L-glutamine + ATP + H2O = 2-formamido-N(1)-(5-O-phospho-beta-D-ribosyl)acetamidine + L-glutamate + ADP + phosphate + H(+). It participates in purine metabolism; IMP biosynthesis via de novo pathway; 5-amino-1-(5-phospho-D-ribosyl)imidazole from N(2)-formyl-N(1)-(5-phospho-D-ribosyl)glycinamide: step 1/2. Functionally, part of the phosphoribosylformylglycinamidine synthase complex involved in the purines biosynthetic pathway. Catalyzes the ATP-dependent conversion of formylglycinamide ribonucleotide (FGAR) and glutamine to yield formylglycinamidine ribonucleotide (FGAM) and glutamate. The FGAM synthase complex is composed of three subunits. PurQ produces an ammonia molecule by converting glutamine to glutamate. PurL transfers the ammonia molecule to FGAR to form FGAM in an ATP-dependent manner. PurS interacts with PurQ and PurL and is thought to assist in the transfer of the ammonia molecule from PurQ to PurL. The sequence is that of Phosphoribosylformylglycinamidine synthase subunit PurL from Rhodococcus opacus (strain B4).